The following is a 1155-amino-acid chain: Eukaryotic translation initiation factor 3 subunit A (1155 aa).

A PCI domain is found at 319–502; it reads LQRMAAHVLL…NSIYFGTDLT (184 aa). Disordered regions lie at residues 589 to 613 and 836 to 1155; these read QNNA…LAEQ and AAEA…VKRR. Composition is skewed to basic and acidic residues over residues 836 to 900, 925 to 987, 1004 to 1057, and 1066 to 1101; these read AAEA…RGGD, DRNE…EPDS, SRDD…DAAP, and DAPR…RAPK. Gly residues predominate over residues 1104–1118; sequence GPSGGTGTAASGGGN. The segment covering 1125-1145 has biased composition (basic and acidic residues); it reads PRDEPAPKRDQPQDKENKAVD.

This sequence belongs to the eIF-3 subunit A family. As to quaternary structure, component of the eukaryotic translation initiation factor 3 (eIF-3) complex. The eIF-3 complex interacts with pix.

The protein localises to the cytoplasm. In terms of biological role, RNA-binding component of the eukaryotic translation initiation factor 3 (eIF-3) complex, which is involved in protein synthesis of a specialized repertoire of mRNAs and, together with other initiation factors, stimulates binding of mRNA and methionyl-tRNAi to the 40S ribosome. The eIF-3 complex specifically targets and initiates translation of a subset of mRNAs involved in cell proliferation. This Drosophila pseudoobscura pseudoobscura (Fruit fly) protein is Eukaryotic translation initiation factor 3 subunit A.